We begin with the raw amino-acid sequence, 258 residues long: Acetylglutamate kinase (258 aa).

Residues 44–45, R66, and N158 each bind substrate; that span reads GG. Residues 181–186 and 209–211 contribute to the ATP site; these read DVSGIL and IIT.

This sequence belongs to the acetylglutamate kinase family. ArgB subfamily. Homodimer.

Its subcellular location is the cytoplasm. It carries out the reaction N-acetyl-L-glutamate + ATP = N-acetyl-L-glutamyl 5-phosphate + ADP. Its pathway is amino-acid biosynthesis; L-arginine biosynthesis; N(2)-acetyl-L-ornithine from L-glutamate: step 2/4. Functionally, catalyzes the ATP-dependent phosphorylation of N-acetyl-L-glutamate. The sequence is that of Acetylglutamate kinase from Escherichia coli O6:K15:H31 (strain 536 / UPEC).